A 192-amino-acid polypeptide reads, in one-letter code: Adenylate kinase (192 aa).

10-18 is an ATP binding site; that stretch reads GVPGVGSTT.

The protein belongs to the archaeal adenylate kinase family. As to quaternary structure, monomer.

It localises to the cytoplasm. It catalyses the reaction AMP + ATP = 2 ADP. In Methanococcus voltae, this protein is Adenylate kinase (adkA).